The sequence spans 398 residues: Cytochrome b (398 aa).

The helical transmembrane segment at 45-65 threads the bilayer; the sequence is LGSIAGIALVIQIITGVILAM. 2 residues coordinate heme b: H95 and H109. The next 8 helical transmembrane spans lie at 97–117, 129–149, 164–184, 192–212, 245–265, 304–324, 335–355, and 364–384; these read VGASMFFATIYLHIARGLYYG, IGIIIFLIMMATAFMGYVLPW, FSAIPLIGEPIVIWLCGGFSV, FFSLHYLFPFIIVALVILHLL, FVGFGVYFIIFAYFIFYEPNY, LAGVFLMFGSIFVLFLLPWLD, PIYRIAFWIFMADCLFLGYLG, and IIISRFSACYYFCHFLVVLPL. H196 and H210 together coordinate heme b.

It belongs to the cytochrome b family. As to quaternary structure, the main subunits of complex b-c1 are: cytochrome b, cytochrome c1 and the Rieske protein. Heme b is required as a cofactor.

It is found in the cell membrane. In terms of biological role, component of the ubiquinol-cytochrome c reductase complex (complex III or cytochrome b-c1 complex), which is a respiratory chain that generates an electrochemical potential coupled to ATP synthesis. The sequence is that of Cytochrome b (petB) from Rickettsia typhi (strain ATCC VR-144 / Wilmington).